Reading from the N-terminus, the 1267-residue chain is Probable ATP-dependent RNA helicase DHR1 (1267 aa).

Disordered stretches follow at residues 1–67 (MGTY…EPLT), 168–233 (YEPK…SNIK), and 255–313 (EELK…DQND). Composition is skewed to basic and acidic residues over residues 7–25 (RFNE…ELKR) and 32–43 (TRQDENDERVEN). Residues 175 to 192 (EYGEGGSSEDDDGEDDFE) are compositionally biased toward acidic residues. Ser-181 is modified (phosphoserine). Positions 202–217 (TDNEEKKSSGFIDHRP) are enriched in basic and acidic residues. The span at 264–284 (DEMDFDTTSEDDDEEEDQEEE) shows a compositional bias: acidic residues. The Helicase ATP-binding domain occupies 401 to 580 (MEAIHHNDVV…KTLFPIAPPV (180 aa)). 414–421 (GETGSGKT) provides a ligand contact to ATP. The short motif at 516 to 519 (DEAH) is the DEAH box element. The 184-residue stretch at 675-858 (DIDFSVQVID…SIVLQMKSMA (184 aa)) folds into the Helicase C-terminal domain. Disordered regions lie at residues 693–720 (RYEE…EVLT) and 955–976 (PNPD…PGMD). Over residues 695–719 (EEDEGNSGNGEDEEDEEEEGFEEVL) the composition is skewed to acidic residues.

The protein belongs to the DEAD box helicase family. DEAH subfamily. Interacts with snoRNA U3. Component of the ribosomal small subunit (SSU) processome composed of at least 40 protein subunits and snoRNA U3.

The protein resides in the nucleus. The protein localises to the nucleolus. The catalysed reaction is ATP + H2O = ADP + phosphate + H(+). In terms of biological role, probable ATP-binding RNA helicase. Required for 18S rRNA synthesis. May play a role in restructuring of the pre-rRNA. This is Probable ATP-dependent RNA helicase DHR1 (ECM16) from Saccharomyces cerevisiae (strain ATCC 204508 / S288c) (Baker's yeast).